We begin with the raw amino-acid sequence, 338 residues long: DNA-directed RNA polymerase subunit alpha (338 aa).

The segment at 1–234 (MIHKNWAELI…DQLGIFVNFE (234 aa)) is alpha N-terminal domain (alpha-NTD). An alpha C-terminal domain (alpha-CTD) region spans residues 250–338 (FNPLLLKKVD…DLAKKFEDSF (89 aa)).

Belongs to the RNA polymerase alpha chain family. As to quaternary structure, homodimer. The RNAP catalytic core consists of 2 alpha, 1 beta, 1 beta' and 1 omega subunit. When a sigma factor is associated with the core the holoenzyme is formed, which can initiate transcription.

The catalysed reaction is RNA(n) + a ribonucleoside 5'-triphosphate = RNA(n+1) + diphosphate. DNA-dependent RNA polymerase catalyzes the transcription of DNA into RNA using the four ribonucleoside triphosphates as substrates. This chain is DNA-directed RNA polymerase subunit alpha, found in Roseobacter denitrificans (strain ATCC 33942 / OCh 114) (Erythrobacter sp. (strain OCh 114)).